The following is a 172-amino-acid chain: 3-hydroxydecanoyl-[acyl-carrier-protein] dehydratase (172 aa).

Histidine 71 is a catalytic residue.

The protein belongs to the thioester dehydratase family. FabA subfamily. As to quaternary structure, homodimer.

The protein localises to the cytoplasm. It carries out the reaction a (3R)-hydroxyacyl-[ACP] = a (2E)-enoyl-[ACP] + H2O. The enzyme catalyses (3R)-hydroxydecanoyl-[ACP] = (2E)-decenoyl-[ACP] + H2O. The catalysed reaction is (2E)-decenoyl-[ACP] = (3Z)-decenoyl-[ACP]. It participates in lipid metabolism; fatty acid biosynthesis. Necessary for the introduction of cis unsaturation into fatty acids. Catalyzes the dehydration of (3R)-3-hydroxydecanoyl-ACP to E-(2)-decenoyl-ACP and then its isomerization to Z-(3)-decenoyl-ACP. Can catalyze the dehydratase reaction for beta-hydroxyacyl-ACPs with saturated chain lengths up to 16:0, being most active on intermediate chain length. In Maricaulis maris (strain MCS10) (Caulobacter maris), this protein is 3-hydroxydecanoyl-[acyl-carrier-protein] dehydratase.